The following is a 78-amino-acid chain: Translation initiation factor IF-1 (78 aa).

In terms of domain architecture, S1-like spans 4-78; sequence KFNNQAKQDK…LKLGRIIGRK (75 aa).

It belongs to the IF-1 family. In terms of assembly, component of the 30S ribosomal translation pre-initiation complex which assembles on the 30S ribosome in the order IF-2 and IF-3, IF-1 and N-formylmethionyl-tRNA(fMet); mRNA recruitment can occur at any time during PIC assembly.

It localises to the cytoplasm. In terms of biological role, one of the essential components for the initiation of protein synthesis. Stabilizes the binding of IF-2 and IF-3 on the 30S subunit to which N-formylmethionyl-tRNA(fMet) subsequently binds. Helps modulate mRNA selection, yielding the 30S pre-initiation complex (PIC). Upon addition of the 50S ribosomal subunit IF-1, IF-2 and IF-3 are released leaving the mature 70S translation initiation complex. The chain is Translation initiation factor IF-1 from Mycoplasma pneumoniae (strain ATCC 29342 / M129 / Subtype 1) (Mycoplasmoides pneumoniae).